A 334-amino-acid polypeptide reads, in one-letter code: Iron-uptake system permease protein FeuB (334 aa).

A run of 9 helical transmembrane segments spans residues 9–29, 63–83, 91–111, 119–139, 150–170, 191–211, 243–263, 281–301, and 305–325; these read IILI…ILYG, AAGA…MQGI, PSIM…MVLL, MMIY…GLAA, LAII…AMSI, PDFL…AISL, VIIL…VGLV, PCSC…SRFI, and FETP…LYLI.

This sequence belongs to the binding-protein-dependent transport system permease family. FecCD subfamily. As to quaternary structure, the complex is composed of one ATP-binding protein (YusV), two transmembrane proteins (FeuB and FeuC) and a solute-binding protein (FeuA).

The protein localises to the cell membrane. It localises to the membrane raft. In terms of biological role, involved in the uptake of iron. Probably responsible for the translocation of the substrate across the membrane. Functionally, part of the ABC transporter complex FeuABC/YusV involved in import of the catecholate siderophores bacillibactin and enterobactin. This chain is Iron-uptake system permease protein FeuB (feuB), found in Bacillus subtilis (strain 168).